The sequence spans 435 residues: Putative acid phosphatase F26C11.1 (435 aa).

His38 (nucleophile) is an active-site residue. The active-site Proton donor is the Asp317. A disulfide bridge connects residues Cys382 and Cys388.

The protein belongs to the histidine acid phosphatase family.

The enzyme catalyses a phosphate monoester + H2O = an alcohol + phosphate. This is Putative acid phosphatase F26C11.1 from Caenorhabditis elegans.